The following is a 122-amino-acid chain: Large ribosomal subunit protein uL18 (122 aa).

This sequence belongs to the universal ribosomal protein uL18 family. As to quaternary structure, part of the 50S ribosomal subunit; part of the 5S rRNA/L5/L18/L25 subcomplex. Contacts the 5S and 23S rRNAs.

In terms of biological role, this is one of the proteins that bind and probably mediate the attachment of the 5S RNA into the large ribosomal subunit, where it forms part of the central protuberance. This is Large ribosomal subunit protein uL18 from Acetivibrio thermocellus (strain ATCC 27405 / DSM 1237 / JCM 9322 / NBRC 103400 / NCIMB 10682 / NRRL B-4536 / VPI 7372) (Clostridium thermocellum).